The chain runs to 307 residues: Agmatinase (307 aa).

Mn(2+) is bound by residues histidine 128, aspartate 151, histidine 153, aspartate 155, aspartate 232, and aspartate 234.

This sequence belongs to the arginase family. Agmatinase subfamily. It depends on Mn(2+) as a cofactor.

The enzyme catalyses agmatine + H2O = urea + putrescine. It functions in the pathway amine and polyamine biosynthesis; putrescine biosynthesis via agmatine pathway; putrescine from agmatine: step 1/1. Catalyzes the formation of putrescine from agmatine. In Neisseria meningitidis serogroup C (strain 053442), this protein is Agmatinase.